The following is a 389-amino-acid chain: Putative teichuronic acid biosynthesis glycosyltransferase TuaC (389 aa).

It belongs to the glycosyltransferase group 1 family. Glycosyltransferase 4 subfamily.

The protein operates within cell wall biogenesis; teichuronic acid biosynthesis. This is Putative teichuronic acid biosynthesis glycosyltransferase TuaC (tuaC) from Bacillus subtilis (strain 168).